A 130-amino-acid chain; its full sequence is Ribonuclease pancreatic (130 aa).

The signal sequence occupies residues 1 to 6; the sequence is VQPSLG. Substrate contacts are provided by Lys13 and Arg16. His18 acts as the Proton acceptor in catalysis. Disulfide bonds link Cys32/Cys90, Cys46/Cys101, Cys64/Cys116, and Cys71/Cys78. N-linked (GlcNAc...) asparagine glycosylation is present at Asn40. Residues 47-51, Lys72, and Arg91 contribute to the substrate site; that span reads KPVNT. His125 functions as the Proton donor in the catalytic mechanism.

It belongs to the pancreatic ribonuclease family. Monomer. Interacts with and forms tight 1:1 complexes with RNH1. Dimerization of two such complexes may occur. Interaction with RNH1 inhibits this protein. Pancreas.

The protein localises to the secreted. The enzyme catalyses an [RNA] containing cytidine + H2O = an [RNA]-3'-cytidine-3'-phosphate + a 5'-hydroxy-ribonucleotide-3'-[RNA].. It carries out the reaction an [RNA] containing uridine + H2O = an [RNA]-3'-uridine-3'-phosphate + a 5'-hydroxy-ribonucleotide-3'-[RNA].. Endonuclease that catalyzes the cleavage of RNA on the 3' side of pyrimidine nucleotides. Acts on single-stranded and double-stranded RNA. The sequence is that of Ribonuclease pancreatic (RNASE1) from Cricetulus griseus (Chinese hamster).